A 552-amino-acid chain; its full sequence is Arginine--tRNA ligase (552 aa).

The 'HIGH' region motif lies at 124–134 (GNPTGPLHLAH).

Belongs to the class-I aminoacyl-tRNA synthetase family. In terms of assembly, monomer.

It is found in the cytoplasm. It catalyses the reaction tRNA(Arg) + L-arginine + ATP = L-arginyl-tRNA(Arg) + AMP + diphosphate. This chain is Arginine--tRNA ligase, found in Tropheryma whipplei (strain Twist) (Whipple's bacillus).